A 526-amino-acid chain; its full sequence is Bifunctional purine biosynthesis protein PurH (526 aa).

In terms of domain architecture, MGS-like spans 15–161; that stretch reads DVVPIRRALI…KNHANVAIVV (147 aa).

Belongs to the PurH family.

The enzyme catalyses (6R)-10-formyltetrahydrofolate + 5-amino-1-(5-phospho-beta-D-ribosyl)imidazole-4-carboxamide = 5-formamido-1-(5-phospho-D-ribosyl)imidazole-4-carboxamide + (6S)-5,6,7,8-tetrahydrofolate. It catalyses the reaction IMP + H2O = 5-formamido-1-(5-phospho-D-ribosyl)imidazole-4-carboxamide. Its pathway is purine metabolism; IMP biosynthesis via de novo pathway; 5-formamido-1-(5-phospho-D-ribosyl)imidazole-4-carboxamide from 5-amino-1-(5-phospho-D-ribosyl)imidazole-4-carboxamide (10-formyl THF route): step 1/1. The protein operates within purine metabolism; IMP biosynthesis via de novo pathway; IMP from 5-formamido-1-(5-phospho-D-ribosyl)imidazole-4-carboxamide: step 1/1. The polypeptide is Bifunctional purine biosynthesis protein PurH (Leifsonia xyli subsp. xyli (strain CTCB07)).